A 175-amino-acid polypeptide reads, in one-letter code: Enhancer of mRNA-decapping protein 1 (175 aa).

A compositionally biased stretch (polar residues) spans 1–27; the sequence is MSTDTMYFNSSRLLPSAGRNKTNNLIK. 2 disordered regions span residues 1 to 113 and 155 to 175; these read MSTD…KDDT and GSTF…PSFL. At Ser2 the chain carries N-acetylserine. Low complexity predominate over residues 35–47; sequence ARGNAAKNANNNN. The span at 58 to 77 shows a compositional bias: polar residues; that stretch reads LPNGQKPNFGHSSNKKPSFN. Ser82 carries the phosphoserine modification. Basic and acidic residues predominate over residues 100 to 113; the sequence is NNKETPRQNNKDDT.

Belongs to the EDC family.

Its subcellular location is the cytoplasm. Its function is as follows. mRNA-binding protein which stimulates mRNA decapping by DCP1 and DCP2. Involved in the regulation of expression of multiple genes involved in glycolysis and gluconeogenesis. In Saccharomyces cerevisiae (strain ATCC 204508 / S288c) (Baker's yeast), this protein is Enhancer of mRNA-decapping protein 1 (EDC1).